Reading from the N-terminus, the 558-residue chain is Atlastin-1 (558 aa).

A disordered region spans residues 1–27 (MAKNRRDRNSWGGFSEKTYEWSSEEEE). The segment at 1-34 (MAKNRRDRNSWGGFSEKTYEWSSEEEEPVKKAGP) is N-terminal hypervariable region (HVR). Topologically, residues 1-449 (MAKNRRDRNS…NIFHAARTPA (449 aa)) are cytoplasmic. Phosphoserine is present on residues S10, S22, and S23. In terms of domain architecture, GB1/RHD3-type G spans 64–309 (DKEVVAVSVA…LIPWLLSPES (246 aa)). The GDP site is built by R77, K78, G79, K80, S81, F82, Q148, R217, D218, V276, and N279. 6 residues coordinate GTP: R77, K78, G79, K80, S81, and F82. Residue S81 coordinates Mg(2+). Positions 217, 218, and 276 each coordinate GTP. Residues 347 to 438 (MLQATAEANN…YIQYIKHNDS (92 aa)) form a 3HB (three-helix bundle) domain region. At K395 the chain carries N6-acetyllysine. Positions 412–439 (EFSRRYLQQLESEIDELYIQYIKHNDSK) form a coiled coil. Residues 439 to 447 (KNIFHAART) form a linker region. A helical membrane pass occupies residues 450-470 (TLFVVIFITYVIAGVTGFIGL). Residue D471 is a topological domain, lumenal. A helical transmembrane segment spans residues 472 to 492 (IIASLCNMIMGLTLITLCTWA). Residues 493-558 (YIRYSGEYRE…STEQSEKKKM (66 aa)) are Cytoplasmic-facing. An autoinhibitory domain region spans residues 521–558 (NEALYKLYSAAATHRHLYHQAFPTPKSESTEQSEKKKM).

The protein belongs to the TRAFAC class dynamin-like GTPase superfamily. GB1/RHD3 GTPase family. GB1 subfamily. Monomeric and homodimeric. The homodimer, transiently formed by two molecules on opposing membranes, is the active form mediating ER membrane fusion. Interacts with REEP1, REEP5, RTN3 and RTN4 (via the transmembrane region); these proteins are involved in endoplasmic reticulum tubular network organization. Interacts with ZFYVE27; both proteins are involved in endoplasmic reticulum tubular network organization. Interacts with ARL6IP1; both proteins are involved in endoplasmic reticulum tubular network organization. Interacts with SPAST; the interaction is direct, could recruit SPAST to Golgi membranes. Interacts (via N-terminal region) with MAP4K4 (via CNH regulatory domain). May interact with TMED2. Interacts with CPT1C. Phosphorylated. Phosphorylation, by different kinases, of the N-terminal hypervariable region (HVR) regulates the ATL1-mediated membrane tethering step.

It is found in the endoplasmic reticulum membrane. Its subcellular location is the golgi apparatus membrane. The protein localises to the cell projection. The protein resides in the axon. It catalyses the reaction GTP + H2O = GDP + phosphate + H(+). Atlastin-1 (ATL1) is a membrane-anchored GTPase that mediates the GTP-dependent fusion of endoplasmic reticulum (ER) membranes, maintaining the continuous ER network. It facilitates the formation of three-way junctions where ER tubules intersect. Two atlastin-1 on neighboring ER tubules bind GTP and form loose homodimers through the GB1/RHD3-type G domains and 3HB regions. Upon GTP hydrolysis, the 3HB regions tighten, pulling the membranes together to drive their fusion. After fusion, the homodimer disassembles upon release of inorganic phosphate (Pi). Subsequently, GDP dissociates, resetting the monomers to a conformation ready for a new fusion cycle. May also regulate more or less directly Golgi biogenesis. Indirectly regulates axonal development. This Macaca fascicularis (Crab-eating macaque) protein is Atlastin-1.